Reading from the N-terminus, the 190-residue chain is Holliday junction branch migration complex subunit RuvA (190 aa).

Residues 1 to 65 (MIGNLSGIVD…ENVAQLYGFI (65 aa)) are domain I. Positions 66 to 143 (SKEEQQCLRL…KLEINNNNFH (78 aa)) are domain II. Residues 144-147 (PINE) form a flexible linker region. Residues 147 to 190 (EDALSALINLGYEKMKAYDTIKKYRPNLDTKDIIRMALKELSIL) form a domain III region.

Belongs to the RuvA family. As to quaternary structure, homotetramer. Forms an RuvA(8)-RuvB(12)-Holliday junction (HJ) complex. HJ DNA is sandwiched between 2 RuvA tetramers; dsDNA enters through RuvA and exits via RuvB. An RuvB hexamer assembles on each DNA strand where it exits the tetramer. Each RuvB hexamer is contacted by two RuvA subunits (via domain III) on 2 adjacent RuvB subunits; this complex drives branch migration. In the full resolvosome a probable DNA-RuvA(4)-RuvB(12)-RuvC(2) complex forms which resolves the HJ.

The protein resides in the cytoplasm. Functionally, the RuvA-RuvB-RuvC complex processes Holliday junction (HJ) DNA during genetic recombination and DNA repair, while the RuvA-RuvB complex plays an important role in the rescue of blocked DNA replication forks via replication fork reversal (RFR). RuvA specifically binds to HJ cruciform DNA, conferring on it an open structure. The RuvB hexamer acts as an ATP-dependent pump, pulling dsDNA into and through the RuvAB complex. HJ branch migration allows RuvC to scan DNA until it finds its consensus sequence, where it cleaves and resolves the cruciform DNA. The chain is Holliday junction branch migration complex subunit RuvA from Wolbachia pipientis wMel.